Here is a 389-residue protein sequence, read N- to C-terminus: Putative serine/threonine-protein kinase (389 aa).

The region spanning 15–356 (YRIEKLINRG…LMVSNYLPWY (342 aa)) is the Protein kinase domain. The Proton acceptor role is filled by aspartate 164.

The protein belongs to the protein kinase superfamily. Ser/Thr protein kinase family.

The enzyme catalyses L-seryl-[protein] + ATP = O-phospho-L-seryl-[protein] + ADP + H(+). The catalysed reaction is L-threonyl-[protein] + ATP = O-phospho-L-threonyl-[protein] + ADP + H(+). This is Putative serine/threonine-protein kinase from Mycoplasma pneumoniae (strain ATCC 29342 / M129 / Subtype 1) (Mycoplasmoides pneumoniae).